The sequence spans 1069 residues: Adenylate-forming reductase (1069 aa).

The tract at residues 20–391 (HPEDPKAVKS…WKLRQDINYR (372 aa)) is adenylation (A) domain. AMP is bound by residues His262, 357–358 (AH), Thr362, and 437–440 (AVGR). Residues 576–656 (DSLEEDLKDL…KLGASLRHLA (81 aa)) form the Carrier domain. Ser612 bears the O-(pantetheine 4'-phosphoryl)serine mark. The tract at residues 686–1032 (TVLLTGSTGN…TGKVILDTSR (347 aa)) is reductase (R) domain. Residues 693 to 696 (TGNL), Arg719, 785 to 787 (NAW), Tyr863, and Lys867 each bind NADP(+).

This sequence belongs to the adenylate-forming reductase family.

It carries out the reaction 5-methylorsellinate + ATP + NADPH + H(+) = 2,4-dihydroxy 5,6-dimethylbenzaldehyde + AMP + diphosphate + NADP(+). The protein operates within secondary metabolite biosynthesis. In terms of biological role, non-canonical non-ribosomal peptide synthetase; part of the cluster A that mediates the biosynthesis of azasperpyranones, members of the azaphilone family that exhibit anti-cancer activities. Azasperpyranones are synthesized by 2 clusters, A and B. Cluster A is responsible for the production of the polyhydric phenol moiety while the azaphilonoid scaffold is produced by the cluster B. The non-reducing polyketide synthase ATEG_03629 produces 5-methyl orsellinic acid, which is then reduced to 5-methyl orsellinic aldehyde by the NRPS-like protein ATEG_03630. 5-methyl orsellinic aldehyde is then first hydroxylated by the FAD-dependent monooxygenase ATEG_03635 and subsequently hydroxylated by the cytochrome P450 monooxygenase ATEG_03631 to produce the unstable polyhydric phenol precursor of azasperpyranones. On the other hand, the polyketide synthase ATEG_07659 is responsible for producing the 3,5-dimethyloctadienone moiety from acetyl-CoA, three malonyl-CoA, and two S-adenosyl methionines (SAM). The 3,5-dimethyloctadienone moiety is then loaded onto the SAT domain of ATEG_07661 and extended with four malonyl-CoA and one SAM, which leads to the formation of 2,4-dihydroxy-6-(5,7-dimethyl-2-oxo-trans-3-trans-5-nonadienyl)-3-methylbenzaldehyde (compound 8) after reductive release and aldol condensation. The FAD-dependent monooxygenase ATEG_07662 is the next enzyme in the biosynthesis sequence and hydroxylates the side chain at the benzylic position of compound 8. In Aspergillus nidulans, afoF, the ortholog of the FAD-dependent oxygenase ATEG_07660, is the key enzyme for the biosynthesis of asperfuranone by catalyzing the hydroxylation at C-8 of to prevent the formation of a six-membered ring hemiacetal intermediate and thus facilitating the formation of a five-membered ring to produce asperfuranone. In Aspergillus terreus, ATEG_07660 is probably not functional, which leads to the formation of the six-membered ring hemiacetal intermediate presperpyranone instead of asperfuranone. Finally, ATEG_03636 is involved in the condensation of the polyhydric phenol moiety produced by cluster A and the perasperpyranone precursor produced by cluster B, to yield azasperpyranone A. Further modifications of azasperpyranone A result in the production of derivatives, including azasperpyranone B to F. This Aspergillus terreus (strain NIH 2624 / FGSC A1156) protein is Adenylate-forming reductase.